A 348-amino-acid chain; its full sequence is Dihydroorotase (348 aa).

Zn(2+)-binding residues include H14 and H16. Residues 16–18 (HLR) and N42 contribute to the substrate site. Residues K100, H137, and H175 each contribute to the Zn(2+) site. Residue K100 is modified to N6-carboxylysine. H137 lines the substrate pocket. L220 contacts substrate. D248 serves as a coordination point for Zn(2+). D248 is a catalytic residue. H252 and A264 together coordinate substrate.

This sequence belongs to the metallo-dependent hydrolases superfamily. DHOase family. Class II DHOase subfamily. Homodimer. Zn(2+) serves as cofactor.

It catalyses the reaction (S)-dihydroorotate + H2O = N-carbamoyl-L-aspartate + H(+). Its pathway is pyrimidine metabolism; UMP biosynthesis via de novo pathway; (S)-dihydroorotate from bicarbonate: step 3/3. In terms of biological role, catalyzes the reversible cyclization of carbamoyl aspartate to dihydroorotate. The chain is Dihydroorotase from Pseudomonas aeruginosa (strain LESB58).